A 448-amino-acid polypeptide reads, in one-letter code: MKSCEVNFDGLVGPTHNYGGLSYGNVASQSNSQQCSNPREAALQGLAKMKALMDMGFTQGVLAPQERPDVASLRQLGFTGSDEQVIEKAARQDMPLLVASCSASSMWVANAATVSPSADTADGRVHFTAANLNCKYHRSIEHPTTSRVLGAMFADAKHFAHHPALPSVAQFGDEGAANHTRFCQDYGQAGVEFFVFGRSAFDTRYAAPQKYPARQTLEASRAVARLHGLSDECVVYGQQNPAVIDQGVFHNDVIAVGNGEVLFYHEDAFLHTEQMLGELRDKLSRAGGQLQAVCVPRAEVSVQDAVRSYLFNSQLLSRPDGSMLLIVPQECQANANVWGYLQRLIADAGPVAEVKVFDLKQSMQNGGGPACLRLRVALNETELAAVNPGVIMTAPLYETLTQWVDRHYRDRMSENDLADPRLLTECRTALDELTQILKLGAVYPFQLN.

Substrate is bound by residues 19–28 (GGLSYGNVAS), Asn-110, and 137–138 (HR). Glu-174 is an active-site residue. Arg-214 lines the substrate pocket. His-250 is an active-site residue. Substrate is bound by residues Asp-252 and Asn-365. The active-site Nucleophile is the Cys-371.

It belongs to the succinylarginine dihydrolase family. Homodimer.

The enzyme catalyses N(2)-succinyl-L-arginine + 2 H2O + 2 H(+) = N(2)-succinyl-L-ornithine + 2 NH4(+) + CO2. It functions in the pathway amino-acid degradation; L-arginine degradation via AST pathway; L-glutamate and succinate from L-arginine: step 2/5. In terms of biological role, catalyzes the hydrolysis of N(2)-succinylarginine into N(2)-succinylornithine, ammonia and CO(2). The sequence is that of N-succinylarginine dihydrolase from Pseudomonas syringae pv. tomato (strain ATCC BAA-871 / DC3000).